Here is a 254-residue protein sequence, read N- to C-terminus: HTH-type transcriptional regulator GlvR (254 aa).

An HTH rpiR-type domain is found at 1–77 (MQLEELINQH…VFLKWEDQPE (77 aa)). A DNA-binding region (H-T-H motif) is located at residues 37-56 (IDALAKACSVSRSSILRLAQ). Residues 106-248 (MCQLIDAADR…FRAYVDYKEA (143 aa)) enclose the SIS domain.

Its function is as follows. Positive regulator of the glv operon expression, which consists of GlvA, GlvR and GlvC. The protein is HTH-type transcriptional regulator GlvR (glvR) of Bacillus subtilis (strain 168).